Here is a 1139-residue protein sequence, read N- to C-terminus: Ras GTPase-activating protein nGAP (1139 aa).

Residues 1-87 (MQTPEVPAER…SRGLPKLKES (87 aa)) form a disordered region. S16 bears the Phosphoserine mark. Residues 17-36 (ISGTSTSEKPNSMDTANTSP) are compositionally biased toward polar residues. Residues 41 to 158 (GFFSKRLKGS…WMENLRRTVQ (118 aa)) enclose the PH domain. A compositionally biased stretch (basic residues) spans 45–56 (KRLKGSIKRTKS). The span at 73 to 87 (STDDRSRGLPKLKES) shows a compositional bias: basic and acidic residues. At S89 the chain carries Phosphoserine. Residues 149–267 (WMENLRRTVQ…TGRQFVEKWY (119 aa)) form the C2 domain. The Ras-GAP domain occupies 343–551 (GRAKDFLTDL…GGMKRFLLEI (209 aa)). A Phosphothreonine modification is found at T620. At S663 the chain carries Phosphoserine. Disordered stretches follow at residues 684-704 (ASSQ…LPNG), 751-782 (ETQS…LSFQ), 803-869 (SLEN…GQAQ), 910-953 (EPVQ…SATM), and 1116-1139 (NGIS…NSSC). 2 stretches are compositionally biased toward polar residues: residues 751–760 (ETQSTPQSAP) and 803–818 (SLEN…QSNS). The segment covering 833–855 (DFTKRSTQSEDFSRRHTVPDRHI) has biased composition (basic and acidic residues). Residue S864 is modified to Phosphoserine. Residues 916–928 (SRSRQQSSSSRES) show a composition bias toward low complexity.

Interacts with PEAK1.

Functionally, inhibitory regulator of the Ras-cyclic AMP pathway. The protein is Ras GTPase-activating protein nGAP (RASAL2) of Homo sapiens (Human).